Here is a 382-residue protein sequence, read N- to C-terminus: Enoyl-[acyl-carrier-protein] reductase, mitochondrial (382 aa).

A mitochondrion-targeting transit peptide spans 1-17 (MSSFLSKRFLSFSQRAM). The active-site Proton donor is the Y77. NADP(+)-binding positions include N159, 187–190 (TSSV), 210–212 (RDR), 285–288 (YGGM), 310–312 (FWV), and K375.

Belongs to the zinc-containing alcohol dehydrogenase family. Quinone oxidoreductase subfamily. In terms of assembly, homodimer.

It localises to the mitochondrion matrix. The enzyme catalyses a 2,3-saturated acyl-[ACP] + NADP(+) = a (2E)-enoyl-[ACP] + NADPH + H(+). Its function is as follows. Catalyzes the NADPH-dependent reduction of trans-2-enoyl thioesters in mitochondrial fatty acid synthesis (fatty acid synthesis type II). Fatty acid chain elongation in mitochondria uses acyl carrier protein (ACP) as an acyl group carrier, but the enzyme accepts both ACP and CoA thioesters as substrates in vitro. Required for respiration and the maintenance of the mitochondrial compartment. The polypeptide is Enoyl-[acyl-carrier-protein] reductase, mitochondrial (ETR1) (Kluyveromyces lactis (strain ATCC 8585 / CBS 2359 / DSM 70799 / NBRC 1267 / NRRL Y-1140 / WM37) (Yeast)).